The chain runs to 305 residues: Carbonic anhydrase 4 (305 aa).

The N-terminal stretch at 1–17 is a signal peptide; sequence MQLLLALLALAYVAPST. One can recognise an Alpha-carbonic anhydrase domain in the interval 20–278; sequence SGWCYEIQTK…LGKRQVFKSH (259 aa). Intrachain disulfides connect Cys-23–Cys-35 and Cys-45–Cys-222. The active-site Proton donor/acceptor is His-87. Positions 114 and 116 each coordinate Zn(2+). An N-linked (GlcNAc...) asparagine glycan is attached at Asn-123. His-139 is a Zn(2+) binding site. N-linked (GlcNAc...) asparagine glycosylation occurs at Asn-214. Substrate is bound at residue 218 to 219; the sequence is TT. The GPI-anchor amidated serine moiety is linked to residue Ser-277. Residues 278 to 305 constitute a propeptide, removed in mature form; that stretch reads HAPGQLLSLPLPTLLVPTLTCLVANFLQ.

This sequence belongs to the alpha-carbonic anhydrase family. As to quaternary structure, interacts with SLC4A4. Zn(2+) serves as cofactor.

The protein resides in the cell membrane. The enzyme catalyses hydrogencarbonate + H(+) = CO2 + H2O. With respect to regulation, inhibited by acetazolamide. Functionally, catalyzes the reversible hydration of carbon dioxide into bicarbonate and protons and thus is essential to maintaining intracellular and extracellular pH. May stimulate the sodium/bicarbonate transporter activity of SLC4A4 that acts in pH homeostasis. It is essential for acid overload removal from the retina and retina epithelium, and acid release in the choriocapillaris in the choroid. The protein is Carbonic anhydrase 4 (Ca4) of Mus musculus (Mouse).